Reading from the N-terminus, the 381-residue chain is 6-oxocyclohex-1-ene-1-carbonyl-CoA hydrolase (381 aa).

The protein belongs to the enoyl-CoA hydratase/isomerase family. In terms of assembly, homohexamer.

The enzyme catalyses 6-oxocyclohex-1-ene-1-carbonyl-CoA + 2 H2O = 3-hydroxy-6-carboxyhexanoyl-CoA + H(+). The protein operates within aromatic compound metabolism; benzoyl-CoA degradation. Its function is as follows. Involved in the central benzoyl-CoA catabolism. Catalyzes the addition of one molecule of water to the double bond and the hydrolytic cleavage of C-C bond in the alicyclic ring, 6-oxocyclohex-1-ene-1-carbonyl-CoA (6-OCH-CoA) to yield 3-hydroxypimelyl-CoA. This is 6-oxocyclohex-1-ene-1-carbonyl-CoA hydrolase from Geobacter metallireducens (strain ATCC 53774 / DSM 7210 / GS-15).